The following is a 218-amino-acid chain: Claudin-5 (218 aa).

Residues 1–7 are Cytoplasmic-facing; the sequence is MGSAALE. Residues 8–28 traverse the membrane as a helical segment; it reads ILGLVLCLVGWVGLILACGLP. Topologically, residues 29 to 81 are extracellular; that stretch reads MWQVTAFLDHNIVTAQTTWKGLWMSCVVQSTGHMQCKVYESVLALSAEVQAAR. The helical transmembrane segment at 82 to 102 threads the bilayer; that stretch reads ALTVGAVLLALVALFVTLTGA. The Cytoplasmic portion of the chain corresponds to 103–123; the sequence is QCTTCVAPGPVKARVALTGGA. The chain crosses the membrane as a helical span at residues 124–144; it reads LYAVCGLLALVPLCWFANIVV. The Extracellular portion of the chain corresponds to 145–160; it reads REFYDPTVPVSQKYEL. A helical transmembrane segment spans residues 161–181; the sequence is GAALYIGWAASALLMCGGGLV. The Cytoplasmic segment spans residues 182–218; the sequence is CCGAWVCTGRPEFSFPVKYSAPRRPTANGDYDKKNYV. The tract at residues 217-218 is interactions with TJP1, TJP2 and TJP3; the sequence is YV.

This sequence belongs to the claudin family. As to quaternary structure, interacts with MPDZ. Directly interacts with TJP1/ZO-1, TJP2/ZO-2 and TJP3/ZO-3. In terms of tissue distribution, widely expressed with highest levels in the lung.

The protein resides in the cell junction. It localises to the tight junction. It is found in the cell membrane. Plays a major role in tight junction-specific obliteration of the intercellular space, through calcium-independent cell-adhesion activity. This is Claudin-5 (Cldn5) from Mus musculus (Mouse).